The chain runs to 240 residues: GATA transcription factor 4 (240 aa).

The segment at 104-124 (ISFTGKPRSRRSRAPAPSVAG) is disordered. Positions 109 to 116 (KPRSRRSR) match the Nuclear localization signal motif. The GATA-type zinc finger occupies 154–208 (ADGARRCTHCASEKTPQWRTGPLGPKTLCNACGVRYKSGRLVPEYRPASSPTFVL).

Belongs to the type IV zinc-finger family. Class A subfamily. Expressed in roots, flowers and leaves, and to a lower extent in stems.

It localises to the nucleus. Transcriptional activator that specifically binds 5'-GATA-3' or 5'-GAT-3' motifs within gene promoters. May be involved in the regulation of some light-responsive genes. The protein is GATA transcription factor 4 (GATA4) of Arabidopsis thaliana (Mouse-ear cress).